The chain runs to 223 residues: Putative HTLV-1-related endogenous sequence (223 aa).

A compositionally biased stretch (low complexity) spans 1-19; sequence MRCAHAPAPRTRYPTRAPS. Residues 1-184 are disordered; sequence MRCAHAPAPR…ARAHGEAGAG (184 aa). Positions 115–126 are enriched in basic and acidic residues; the sequence is GDRRREGPDRSP. The span at 133–157 shows a compositional bias: low complexity; it reads PAAAAQPDSSSAQAPGPSTLRPAAT.

In Homo sapiens (Human), this protein is Putative HTLV-1-related endogenous sequence (HRES1).